Reading from the N-terminus, the 421-residue chain is ATP-dependent RNA helicase RhlB (421 aa).

The Q motif motif lies at 9–37 (QKFSDFALHPQVVEALEKKRFYNCTPIQA). The Helicase ATP-binding domain maps to 40–219 (LPLTLAGRDV…FEQMNNAEYV (180 aa)). Residue 53–60 (AQTGTGKT) participates in ATP binding. The short motif at 165 to 168 (DEAD) is the DEAD box element. In terms of domain architecture, Helicase C-terminal spans 245–390 (RLLQTLIEEE…VSKYNPEALM (146 aa)). The disordered stretch occupies residues 396–421 (PLRLTRSRPGNGPRRAGAPRNRRRSG). Residues 402-414 (SRPGNGPRRAGAP) show a composition bias toward low complexity.

Belongs to the DEAD box helicase family. RhlB subfamily. Component of the RNA degradosome, which is a multiprotein complex involved in RNA processing and mRNA degradation.

It localises to the cytoplasm. It carries out the reaction ATP + H2O = ADP + phosphate + H(+). DEAD-box RNA helicase involved in RNA degradation. Has RNA-dependent ATPase activity and unwinds double-stranded RNA. This chain is ATP-dependent RNA helicase RhlB, found in Salmonella dublin (strain CT_02021853).